Here is a 246-residue protein sequence, read N- to C-terminus: O-antigen export system ATP-binding protein RfbB (246 aa).

One can recognise an ABC transporter domain in the interval 22–246; sequence SGIKDLIFHP…IIELYKQAMA (225 aa). 63–70 serves as a coordination point for ATP; that stretch reads GRNGAGKS.

The protein belongs to the ABC transporter superfamily.

The protein resides in the cell inner membrane. Functionally, may form an ATP-driven O-antigen export apparatus, in association with RfbA. The protein is O-antigen export system ATP-binding protein RfbB (rfbB) of Klebsiella pneumoniae.